Here is a 193-residue protein sequence, read N- to C-terminus: MVATGSLSSKNPASISELLDCGYHPESLLSDFDYWDYVVPEPNLNEVIFEESTCQNLVKMLENCLSKSKQTKLGCSKVLVPEKLTQRIAQDVLRLSSTEPCGLRGCVMHVNLEIENVCKKLDRIVCDSSVVPTFELTLVFKQENCSWTSFRDFFFSRGRFSSGFRRTLILSSGFRLVKKKLYSLIGTTVIEGS.

It belongs to the DDIT4 family. As to expression, up-regulated in atherosclerotic plaques relative to healthy segments of the same artery.

Its subcellular location is the cytoplasm. Its function is as follows. Inhibits cell growth by regulating the TOR signaling pathway upstream of the TSC1-TSC2 complex and downstream of AKT1. This is DNA damage-inducible transcript 4-like protein (DDIT4L) from Homo sapiens (Human).